We begin with the raw amino-acid sequence, 402 residues long: Pyridinium-3,5-bisthiocarboxylic acid mononucleotide nickel insertion protein (402 aa).

This sequence belongs to the LarC family.

The enzyme catalyses Ni(II)-pyridinium-3,5-bisthiocarboxylate mononucleotide = pyridinium-3,5-bisthiocarboxylate mononucleotide + Ni(2+). Involved in the biosynthesis of a nickel-pincer cofactor ((SCS)Ni(II) pincer complex). Binds Ni(2+), and functions in nickel delivery to pyridinium-3,5-bisthiocarboxylic acid mononucleotide (P2TMN), to form the mature cofactor. Is thus probably required for the activation of nickel-pincer cofactor-dependent enzymes. The protein is Pyridinium-3,5-bisthiocarboxylic acid mononucleotide nickel insertion protein of Desulfitobacterium hafniense (strain DSM 10664 / DCB-2).